A 181-amino-acid chain; its full sequence is Putative adenylate kinase (181 aa).

5 residues coordinate ATP: Gly10, Gly12, Lys13, Ser14, and Thr15. Residues 35-58 form an NMP region; sequence NITEVVSKNGLYLEKDIEMDSYVV. An LID region spans residues 106 to 116; sequence SRNYSSEKVKE. Residues Arg107 and Lys147 each contribute to the ATP site.

Belongs to the adenylate kinase family. AK6 subfamily. Interacts with uS11. Not a structural component of 40S pre-ribosomes, but transiently interacts with them by binding to uS11.

The enzyme catalyses AMP + ATP = 2 ADP. The catalysed reaction is ATP + H2O = ADP + phosphate + H(+). Broad-specificity nucleoside monophosphate (NMP) kinase that catalyzes the reversible transfer of the terminal phosphate group between nucleoside triphosphates and monophosphates. Also has ATPase activity. Involved in the late maturation steps of the 30S ribosomal particles, specifically 16S rRNA maturation. While NMP activity is not required for ribosome maturation, ATPase activity is. Associates transiently with small ribosomal subunit protein uS11. ATP hydrolysis breaks the interaction with uS11. May temporarily remove uS11 from the ribosome to enable a conformational change of the ribosomal RNA that is needed for the final maturation step of the small ribosomal subunit. The protein is Putative adenylate kinase of Methanococcus maripaludis (strain C7 / ATCC BAA-1331).